The sequence spans 308 residues: MLTVQELVDDNADKIPFSWIAGHDAADRAISDDGMAAADLVGHLNLIHPSRIQVFGQEELAYYTRFDLRRRMHHMDELLIGGVPAILLADGLTPPQDLIDQCAQHQVPLLSTPVAAAQLIDLLRIYLGKKLAPTTTVHGVFLDVLGLGVLITGESGLGKSELALELISRGHGLVADDAVELSRTAPGVIEGHCPQLLQNLLEVRGLGLLDIRTIFGETSVRRKMRLKLIVHLVRATAQDKFERLPLQDITQDMLGLPIRKVMLQVAAGRNLAVLVEAAVRNTILKLRGIDTLGEFMERQAMAILQSSK.

Catalysis depends on residues His138 and Lys159. 153–160 (GESGLGKS) is an ATP binding site. Residue Ser160 coordinates Mg(2+). Residue Asp177 is the Proton acceptor; for phosphorylation activity. Proton donor; for dephosphorylation activity of the active site. The interval 201 to 210 (LEVRGLGLLD) is important for the catalytic mechanism of both phosphorylation and dephosphorylation. Residue Glu202 coordinates Mg(2+). Residue Arg243 is part of the active site. The tract at residues 264–269 (QVAAGR) is important for the catalytic mechanism of dephosphorylation.

It belongs to the HPrK/P family. In terms of assembly, homohexamer. Mg(2+) serves as cofactor.

The enzyme catalyses [HPr protein]-L-serine + ATP = [HPr protein]-O-phospho-L-serine + ADP + H(+). The catalysed reaction is [HPr protein]-O-phospho-L-serine + phosphate + H(+) = [HPr protein]-L-serine + diphosphate. In terms of biological role, catalyzes the ATP- as well as the pyrophosphate-dependent phosphorylation of a specific serine residue in HPr, a phosphocarrier protein of the phosphoenolpyruvate-dependent sugar phosphotransferase system (PTS). HprK/P also catalyzes the pyrophosphate-producing, inorganic phosphate-dependent dephosphorylation (phosphorolysis) of seryl-phosphorylated HPr (P-Ser-HPr). The protein is HPr kinase/phosphorylase of Bordetella pertussis (strain Tohama I / ATCC BAA-589 / NCTC 13251).